The following is a 121-amino-acid chain: Acid shock protein (121 aa).

The first 21 residues, 1-21 (MKKVLALMVAATLGLSSVAFA), serve as a signal peptide directing secretion. The propeptide occupies 22 to 63 (ADTTATATPAATSTTATVAAQTKATQHQKHKVTKKTTEQKAQ). The interval 40–121 (AAQTKATQHQ…AKKPVAAPAA (82 aa)) is disordered. Residues 84 to 93 (AAKKHVKKAS) show a composition bias toward basic residues. Residues 94–103 (VQKAPVQKAQ) show a composition bias toward low complexity. Positions 104–113 (AAKKHHKTAK) are enriched in basic residues.

The protein belongs to the Asr family. Proteolytic processing gives rise to the active protein.

It is found in the periplasm. In terms of biological role, required for growth and/or survival at acidic conditions. The chain is Acid shock protein from Yersinia pestis bv. Antiqua (strain Antiqua).